The sequence spans 84 residues: Sulfur carrier protein TusA (84 aa).

Cysteine 19 acts as the Cysteine persulfide intermediate in catalysis.

The protein belongs to the sulfur carrier protein TusA family. In terms of assembly, interacts with IscS.

It localises to the cytoplasm. It functions in the pathway tRNA modification. Sulfur carrier protein involved in sulfur trafficking in the cell. Part of a sulfur-relay system required for 2-thiolation during synthesis of 2-thiouridine of the modified wobble base 5-methylaminomethyl-2-thiouridine (mnm(5)s(2)U) in tRNA. Interacts with IscS and stimulates its cysteine desulfurase activity. Accepts an activated sulfur from IscS, which is then transferred to TusD, and thus determines the direction of sulfur flow from IscS to 2-thiouridine formation. Also appears to be involved in sulfur transfer for the biosynthesis of molybdopterin. In Proteus mirabilis (strain HI4320), this protein is Sulfur carrier protein TusA.